The following is a 461-amino-acid chain: Gustatory and pheromone receptor 32a (461 aa).

Residues 1–100 are Cytoplasmic-facing; sequence MSPNTWVIEM…YSFFVRGVVH (100 aa). Residues 101–121 form a helical membrane-spanning segment; that stretch reads ALTIFNVYSLFTPISAQLFFS. At 122–127 the chain is on the extracellular side; the sequence is YRETDN. Residues 128–148 form a helical membrane-spanning segment; it reads VNQWIELLLCILTYTLTVFVC. Residues 149 to 180 are Cytoplasmic-facing; the sequence is AHNTTSMLRIMNEILQLDEEVRRQFGANLSQN. The helical transmembrane segment at 181–201 threads the bilayer; it reads FGFLVKFLVGITACQAYIIVL. Topologically, residues 202–214 are extracellular; that stretch reads KIYAVQGEITPTS. The chain crosses the membrane as a helical span at residues 215–235; sequence YILLAFYGIQNGLTATYIVFA. At 236 to 317 the chain is on the cytoplasmic side; that stretch reads SALLRIVYIR…YKGINDCCNL (82 aa). The helical transmembrane segment at 318 to 338 threads the bilayer; the sequence is ILVSFLGYSFYTVTTNCYNLF. Over 339 to 348 the chain is Extracellular; sequence VQITGKGMVS. A helical transmembrane segment spans residues 349-369; the sequence is PNILQWCFAWLCLHVSLLALL. The Cytoplasmic segment spans residues 370 to 414; the sequence is SRSCGLTTTEANATSQILARVYAKSKEYQNIIDKFLTKSIKQEVQ. Residues 415–435 form a helical membrane-spanning segment; sequence FTAYGFFAIDNSTLFKIFSAV. The Extracellular portion of the chain corresponds to 436 to 461; sequence TTYLVILIQFKQLEDSKVEDPVPEQT.

This sequence belongs to the insect chemoreceptor superfamily. Gustatory receptor (GR) family. Gr21a subfamily. In terms of tissue distribution, expressed in the adult labellar chemosensory neurons. Expressed in tarsal neurons for male-male courtship suppression. In larvae, is expressed in neurons of the terminal external chemosensory organ, and the dorsal and posterior external chemosensory organs.

The protein localises to the cell membrane. Its function is as follows. Gustatory receptor which mediates acceptance or avoidance behavior, depending on its substrates. Required for the response to N,N-Diethyl-meta-toluamide (DEET), the most widely used insect repellent worldwide. Functions as a pheromone receptor for a male inhibitory pheromone and promotes male-male aggression and suppresses male-male courtship. Also promotes preferentially virgin females courting over mated females. This is Gustatory and pheromone receptor 32a (Gr32a) from Drosophila melanogaster (Fruit fly).